We begin with the raw amino-acid sequence, 100 residues long: Urease subunit gamma (100 aa).

This sequence belongs to the urease gamma subunit family. As to quaternary structure, heterotrimer of UreA (gamma), UreB (beta) and UreC (alpha) subunits. Three heterotrimers associate to form the active enzyme.

It localises to the cytoplasm. The enzyme catalyses urea + 2 H2O + H(+) = hydrogencarbonate + 2 NH4(+). The protein operates within nitrogen metabolism; urea degradation; CO(2) and NH(3) from urea (urease route): step 1/1. In Haemophilus influenzae (strain ATCC 51907 / DSM 11121 / KW20 / Rd), this protein is Urease subunit gamma.